The chain runs to 404 residues: Cysteine desulfurase IscS (404 aa).

Residues 75-76 (AT), asparagine 155, glutamine 183, and 203-205 (SGH) contribute to the pyridoxal 5'-phosphate site. Lysine 206 bears the N6-(pyridoxal phosphate)lysine mark. Residue threonine 243 participates in pyridoxal 5'-phosphate binding. Residue cysteine 328 is the Cysteine persulfide intermediate of the active site. Cysteine 328 contributes to the [2Fe-2S] cluster binding site.

This sequence belongs to the class-V pyridoxal-phosphate-dependent aminotransferase family. NifS/IscS subfamily. Homodimer. Forms a heterotetramer with IscU, interacts with other sulfur acceptors. Pyridoxal 5'-phosphate is required as a cofactor.

The protein localises to the cytoplasm. The enzyme catalyses (sulfur carrier)-H + L-cysteine = (sulfur carrier)-SH + L-alanine. It functions in the pathway cofactor biosynthesis; iron-sulfur cluster biosynthesis. Its function is as follows. Master enzyme that delivers sulfur to a number of partners involved in Fe-S cluster assembly, tRNA modification or cofactor biosynthesis. Catalyzes the removal of elemental sulfur atoms from cysteine to produce alanine. Functions as a sulfur delivery protein for Fe-S cluster synthesis onto IscU, an Fe-S scaffold assembly protein, as well as other S acceptor proteins. This is Cysteine desulfurase IscS from Shewanella putrefaciens (strain CN-32 / ATCC BAA-453).